Consider the following 213-residue polypeptide: GTP cyclohydrolase 1 (213 aa).

Zn(2+)-binding residues include Cys104, His107, and Cys175.

This sequence belongs to the GTP cyclohydrolase I family. As to quaternary structure, toroid-shaped homodecamer, composed of two pentamers of five dimers.

It carries out the reaction GTP + H2O = 7,8-dihydroneopterin 3'-triphosphate + formate + H(+). It participates in cofactor biosynthesis; 7,8-dihydroneopterin triphosphate biosynthesis; 7,8-dihydroneopterin triphosphate from GTP: step 1/1. This Brucella anthropi (strain ATCC 49188 / DSM 6882 / CCUG 24695 / JCM 21032 / LMG 3331 / NBRC 15819 / NCTC 12168 / Alc 37) (Ochrobactrum anthropi) protein is GTP cyclohydrolase 1.